The sequence spans 307 residues: MWFKNLQLHRLPAPWAVTPDQMEKWLAPHAFQPGSSVEMQRVGWASPRDDGALVYSNNRQMLLLFRAEKKLLPASVVNQVTKARALEVEEQQGFKVGRKQLRELKEQVTDELLPRAFSIRRDTRVWIDTANGWLVIDAAAQALADDVRSLLVKSIDQLPLAGVHVARSPVAAMTDWLLSGEAPGGFTVDQDAELRSSGEGGATVRYVGHALEANDMRRHIEAGKQCMRLAMTWNDRISFVLTPSLTIKRVTPLDVIKEAADPTAQNDDERFDSDFTLMTGELARMLASLVDILGGDQQDAIQQAAAA.

It belongs to the RdgC family.

It is found in the cytoplasm. It localises to the nucleoid. In terms of biological role, may be involved in recombination. This Burkholderia orbicola (strain MC0-3) protein is Recombination-associated protein RdgC.